Reading from the N-terminus, the 179-residue chain is Large ribosomal subunit protein uL6 (179 aa).

This sequence belongs to the universal ribosomal protein uL6 family. Part of the 50S ribosomal subunit.

Functionally, this protein binds to the 23S rRNA, and is important in its secondary structure. It is located near the subunit interface in the base of the L7/L12 stalk, and near the tRNA binding site of the peptidyltransferase center. This is Large ribosomal subunit protein uL6 from Legionella pneumophila (strain Paris).